We begin with the raw amino-acid sequence, 223 residues long: F420-dependent NADP reductase (223 aa).

NADP(+) is bound by residues Thr9 to Gln12, Ser30 to Arg31, Lys35, Leu75, and Val101.

This sequence belongs to the F420-dependent NADP reductase family.

The catalysed reaction is reduced coenzyme F420-(gamma-L-Glu)(n) + NADP(+) = oxidized coenzyme F420-(gamma-L-Glu)(n) + NADPH + 2 H(+). Catalyzes the reduction of NADP(+) with F420H(2) via hydride transfer, and the reverse reaction, i.e. the reduction of F420 with NADPH. Probably functions in the regeneration of NADPH required in biosynthetic reactions. In Methanocaldococcus jannaschii (strain ATCC 43067 / DSM 2661 / JAL-1 / JCM 10045 / NBRC 100440) (Methanococcus jannaschii), this protein is F420-dependent NADP reductase (fno).